A 495-amino-acid polypeptide reads, in one-letter code: Cytochrome P450 2E1 (495 aa).

298-303 (FAGTET) is a substrate binding site. Residue cysteine 437 coordinates heme.

Belongs to the cytochrome P450 family. As to quaternary structure, interacts with chaperones HSP70 and HSP90; this interaction is required for initial targeting to mitochondria. It depends on heme as a cofactor.

It localises to the endoplasmic reticulum membrane. The protein localises to the microsome membrane. The protein resides in the mitochondrion inner membrane. The catalysed reaction is an organic molecule + reduced [NADPH--hemoprotein reductase] + O2 = an alcohol + oxidized [NADPH--hemoprotein reductase] + H2O + H(+). It carries out the reaction (5Z,8Z,11Z)-eicosatrienoate + reduced [NADPH--hemoprotein reductase] + O2 = 19-hydroxy-(5Z,8Z,11Z)-eicosatrienoate + oxidized [NADPH--hemoprotein reductase] + H2O + H(+). The enzyme catalyses (5Z,8Z,11Z,14Z,17Z)-eicosapentaenoate + reduced [NADPH--hemoprotein reductase] + O2 = 19-hydroxy-(5Z,8Z,11Z,14Z,17Z)-eicosapentaenoate + oxidized [NADPH--hemoprotein reductase] + H2O + H(+). It catalyses the reaction (4Z,7Z,10Z,13Z,16Z,19Z)-docosahexaenoate + reduced [NADPH--hemoprotein reductase] + O2 = 21-hydroxy-(4Z,7Z,10Z,13Z,16Z,19Z)-docosahexaenoate + oxidized [NADPH--hemoprotein reductase] + H2O + H(+). The catalysed reaction is dodecanoate + reduced [NADPH--hemoprotein reductase] + O2 = 11-hydroxydodecanoate + oxidized [NADPH--hemoprotein reductase] + H2O + H(+). It carries out the reaction tetradecanoate + reduced [NADPH--hemoprotein reductase] + O2 = 13-hydroxytetradecanoate + oxidized [NADPH--hemoprotein reductase] + H2O + H(+). The enzyme catalyses 4-nitrophenol + NADPH + O2 + H(+) = 4-nitrocatechol + NADP(+) + H2O. It participates in lipid metabolism; fatty acid metabolism. The omega-1 hydroxylase activity is stimulated by cytochrome b5. Its function is as follows. A cytochrome P450 monooxygenase involved in the metabolism of fatty acids. Mechanistically, uses molecular oxygen inserting one oxygen atom into a substrate, and reducing the second into a water molecule, with two electrons provided by NADPH via cytochrome P450 reductase (NADPH--hemoprotein reductase). Catalyzes the hydroxylation of carbon-hydrogen bonds. Hydroxylates fatty acids specifically at the omega-1 position displaying the highest catalytic activity for saturated fatty acids. May be involved in the oxidative metabolism of xenobiotics. This Bos taurus (Bovine) protein is Cytochrome P450 2E1 (CYP2E1).